Reading from the N-terminus, the 139-residue chain is Hydrogenase maturation factor HypA (139 aa).

His2 is a Ni(2+) binding site. Zn(2+) contacts are provided by Cys73, Cys76, Cys110, and Cys113.

The protein belongs to the HypA/HybF family.

Its function is as follows. Involved in the maturation of [NiFe] hydrogenases. Required for nickel insertion into the metal center of the hydrogenase. The protein is Hydrogenase maturation factor HypA of Pyrococcus abyssi (strain GE5 / Orsay).